The following is a 1925-amino-acid chain: Plexin-D1 (1925 aa).

Residues 1 to 18 (MAPRAAGGAPLSARAAAA) are compositionally biased toward low complexity. The interval 1 to 23 (MAPRAAGGAPLSARAAAASPPPF) is disordered. The signal sequence occupies residues 1 to 46 (MAPRAAGGAPLSARAAAASPPPFQTPPRCPVPLLLLLLLGAARAGA). In terms of domain architecture, Sema spans 47-546 (LEIQRRFPSP…TSHQMARVKV (500 aa)). Residues 47–1271 (LEIQRRFPSP…TLQLGGSETA (1225 aa)) lie on the Extracellular side of the membrane. An N-linked (GlcNAc...) asparagine glycan is attached at asparagine 86. Cystine bridges form between cysteine 104–cysteine 114 and cysteine 140–cysteine 148. 3 N-linked (GlcNAc...) asparagine glycosylation sites follow: asparagine 155, asparagine 188, and asparagine 224. Disulfide bonds link cysteine 322-cysteine 445 and cysteine 345-cysteine 389. 2 N-linked (GlcNAc...) asparagine glycosylation sites follow: asparagine 481 and asparagine 500. 5 disulfide bridges follow: cysteine 549/cysteine 566, cysteine 555/cysteine 600, cysteine 558/cysteine 575, cysteine 569/cysteine 581, and cysteine 637/cysteine 661. Residue asparagine 583 is glycosylated (N-linked (GlcNAc...) asparagine). 11 N-linked (GlcNAc...) asparagine glycosylation sites follow: asparagine 696, asparagine 736, asparagine 802, asparagine 965, asparagine 1017, asparagine 1060, asparagine 1099, asparagine 1118, asparagine 1132, asparagine 1237, and asparagine 1257. IPT/TIG domains lie at 891-979 (PEIH…FSYV), 981-1066 (PLVH…FWYM), and 1069-1160 (PVIT…LDPE). A helical transmembrane segment spans residues 1272 to 1292 (IIVSIVICSVLLLLSVVALFV). Topologically, residues 1293 to 1925 (FCTKSRRAER…DNIYECYSEA (633 aa)) are cytoplasmic.

The protein belongs to the plexin family. As to quaternary structure, interacts with NRP1 and SEMA4A. Interacts with SH3BP1; they dissociate upon SEMA3E binding to PLXND1 allowing SH3BP1 to transduce downstream signal through RAC1 inactivation. In terms of tissue distribution, detected at low levels in heart, placenta, lung, skeletal muscle, kidney, thymus and liver. Detected at very low levels in brain, colon, spleen, small intestine and peripheral blood leukocytes.

It is found in the cell membrane. The protein localises to the cell projection. The protein resides in the lamellipodium membrane. Cell surface receptor for SEMA4A and for class 3 semaphorins, such as SEMA3A, SEMA3C and SEMA3E. Plays an important role in cell-cell signaling, and in regulating the migration of a wide spectrum of cell types. Regulates the migration of thymocytes in the medulla. Regulates endothelial cell migration. Plays an important role in ensuring the specificity of synapse formation. Required for normal development of the heart and vasculature. Mediates anti-angiogenic signaling in response to SEMA3E. The protein is Plexin-D1 (PLXND1) of Homo sapiens (Human).